The chain runs to 762 residues: 5-methyltetrahydropteroyltriglutamate--homocysteine methyltransferase (762 aa).

Residues 17–20 and K111 contribute to the 5-methyltetrahydropteroyltri-L-glutamate site; that span reads REWK. Residues 435–437 and E488 each bind L-homocysteine; that span reads IGS. L-methionine-binding positions include 435–437 and E488; that span reads IGS. 5-methyltetrahydropteroyltri-L-glutamate is bound by residues 519 to 520 and W565; that span reads RC. D603 contacts L-homocysteine. Position 603 (D603) interacts with L-methionine. Position 609 (E609) interacts with 5-methyltetrahydropteroyltri-L-glutamate. Zn(2+) is bound by residues H645, C647, and E669. H698 acts as the Proton donor in catalysis. C730 is a binding site for Zn(2+).

It belongs to the vitamin-B12 independent methionine synthase family. The cofactor is Zn(2+).

It carries out the reaction 5-methyltetrahydropteroyltri-L-glutamate + L-homocysteine = tetrahydropteroyltri-L-glutamate + L-methionine. It functions in the pathway amino-acid biosynthesis; L-methionine biosynthesis via de novo pathway; L-methionine from L-homocysteine (MetE route): step 1/1. Catalyzes the transfer of a methyl group from 5-methyltetrahydrofolate to homocysteine resulting in methionine formation. The chain is 5-methyltetrahydropteroyltriglutamate--homocysteine methyltransferase from Bacillus mycoides (strain KBAB4) (Bacillus weihenstephanensis).